The primary structure comprises 353 residues: Photosystem II D2 protein (353 aa).

T2 is modified (N-acetylthreonine). At T2 the chain carries Phosphothreonine. The chain crosses the membrane as a helical span at residues C41 to T61. A chlorophyll a-binding site is contributed by H118. A helical membrane pass occupies residues G125–P141. Residues Q130 and N143 each coordinate pheophytin a. The helical transmembrane segment at V153–S166 threads the bilayer. H198 contributes to the chlorophyll a binding site. The helical transmembrane segment at A208–D228 threads the bilayer. The a plastoquinone site is built by H215 and F262. H215 contacts Fe cation. H269 provides a ligand contact to Fe cation. A helical membrane pass occupies residues G279–R295.

The protein belongs to the reaction center PufL/M/PsbA/D family. As to quaternary structure, PSII is composed of 1 copy each of membrane proteins PsbA, PsbB, PsbC, PsbD, PsbE, PsbF, PsbH, PsbI, PsbJ, PsbK, PsbL, PsbM, PsbT, PsbX, PsbY, PsbZ, Psb30/Ycf12, at least 3 peripheral proteins of the oxygen-evolving complex and a large number of cofactors. It forms dimeric complexes. It depends on The D1/D2 heterodimer binds P680, chlorophylls that are the primary electron donor of PSII, and subsequent electron acceptors. It shares a non-heme iron and each subunit binds pheophytin, quinone, additional chlorophylls, carotenoids and lipids. There is also a Cl(-1) ion associated with D1 and D2, which is required for oxygen evolution. The PSII complex binds additional chlorophylls, carotenoids and specific lipids. as a cofactor.

Its subcellular location is the plastid. The protein localises to the chloroplast thylakoid membrane. The catalysed reaction is 2 a plastoquinone + 4 hnu + 2 H2O = 2 a plastoquinol + O2. Photosystem II (PSII) is a light-driven water:plastoquinone oxidoreductase that uses light energy to abstract electrons from H(2)O, generating O(2) and a proton gradient subsequently used for ATP formation. It consists of a core antenna complex that captures photons, and an electron transfer chain that converts photonic excitation into a charge separation. The D1/D2 (PsbA/PsbD) reaction center heterodimer binds P680, the primary electron donor of PSII as well as several subsequent electron acceptors. D2 is needed for assembly of a stable PSII complex. The sequence is that of Photosystem II D2 protein from Jasminum nudiflorum (Winter jasmine).